A 137-amino-acid chain; its full sequence is MTQAASSQRAVYWGTGRRKTAVARVRLVPGTGKLIINDRPGDQYLQYQEALLASVKAPLELLGLENSYDILVRAHGGGVHGQADAIKLGVARALCEVDPANRGPLKTEGYLKRDPRAVERKKYGLRKARKAPQYSKR.

Residues 105–137 (LKTEGYLKRDPRAVERKKYGLRKARKAPQYSKR) are disordered. Residues 109 to 122 (GYLKRDPRAVERKK) show a composition bias toward basic and acidic residues. The segment covering 123-137 (YGLRKARKAPQYSKR) has biased composition (basic residues).

It belongs to the universal ribosomal protein uS9 family.

In Synechococcus sp. (strain JA-3-3Ab) (Cyanobacteria bacterium Yellowstone A-Prime), this protein is Small ribosomal subunit protein uS9.